The following is a 129-amino-acid chain: Ergosterol biosynthetic protein 28 (129 aa).

4 helical membrane passes run 4–24 (LGYW…FGFF), 46–66 (TFGV…FNLE), 71–91 (YLAT…EYLF), and 96–116 (TIAN…WMLL).

This sequence belongs to the ERG28 family.

It is found in the endoplasmic reticulum membrane. The sequence is that of Ergosterol biosynthetic protein 28 from Arabidopsis thaliana (Mouse-ear cress).